Reading from the N-terminus, the 326-residue chain is Meso-diaminopimelate D-dehydrogenase (326 aa).

NADP(+) contacts are provided by residues 11–14 (YGNL), 35–37 (TRR), 69–72 (CGGS), 92–94 (SFD), and 121–125 (VGWDP). Substrate contacts are provided by residues Asp94, Asp124, Trp148, 154–155 (QG), Thr173, Arg199, His249, and Asn276.

This sequence belongs to the diaminopimelate dehydrogenase family. Homodimer.

The catalysed reaction is meso-2,6-diaminopimelate + NADP(+) + H2O = (S)-2-amino-6-oxoheptanedioate + NH4(+) + NADPH + H(+). It participates in amino-acid biosynthesis; L-lysine biosynthesis via DAP pathway; DL-2,6-diaminopimelate from (S)-tetrahydrodipicolinate: step 1/1. The enzyme is completely inhibited by p-chloromercuribenzoate and HgCl(2) in vitro. Thioglycollate, L-cysteine and Cu(2+) also strongly inhibit the enzyme. Its function is as follows. Catalyzes the reversible NADPH-dependent reductive amination of L-2-amino-6-oxopimelate, the acyclic form of L-tetrahydrodipicolinate, to generate the meso compound, D,L-2,6-diaminopimelate. Probably plays a role in lysine biosynthesis. Is highly specific for meso-2,6-diaminopimelate as the electron donor, since the following amino acids are inert for the oxidative deamination reaction: DL-2-aminopimelate, D-glutamate, L-glutamate, D-aspartate, L-aspartate, D-alanine, L-alanine, D-valine, L-valine, D-lysine, L-lysine, D-phenylalanine, L-phenylalanine, D-leucine, L-leucine, D-threonine, L-threonine, D-serine, L-serine, D-tryptophan, L-tryptophan, D-cysteine, L-cysteine, D-histidine, L-histidine, D-methionine, D-arginine, D-proline, D-asparagine, D-glutamine, D-isoleucine and D-ornithine. Moreover, exclusively uses NADP as the electron acceptor for the oxidative deamination of meso-DAP; NAD is inert. The protein is Meso-diaminopimelate D-dehydrogenase (ddh) of Ureibacillus thermosphaericus.